The chain runs to 195 residues: Recombination protein RecR (195 aa).

Residues 53-68 form a C4-type zinc finger; it reads CSVCFNIDVKSPCSIC. The 96-residue stretch at 76–171 folds into the Toprim domain; that stretch reads QLLCIVEELG…KITRLACGIP (96 aa).

It belongs to the RecR family.

In terms of biological role, may play a role in DNA repair. It seems to be involved in an RecBC-independent recombinational process of DNA repair. It may act with RecF and RecO. In Ehrlichia canis (strain Jake), this protein is Recombination protein RecR.